The primary structure comprises 592 residues: Ferric-chelate reductase 1 (592 aa).

Residues 2–22 (AVSGFTLGTCILLLHISYVAN) form a helical membrane-spanning segment. The region spanning 13 to 179 (LLLHISYVAN…FTTPKATVVP (167 aa)) is the Reelin domain. N-linked (GlcNAc...) asparagine glycosylation is found at Asn138, Asn308, and Asn321. A DOMON domain is found at 216 to 331 (EASCVFLSFT…TSYYIFLADG (116 aa)). The Cytochrome b561 domain occupies 335–534 (DGRIYKHSQQ…VGTEVVLEVH (200 aa)). The chain crosses the membrane as a helical span at residues 372 to 392 (VHGALMFVAWMTTVSIGVLVA). His373 and His414 together coordinate heme b. 2 helical membrane passes run 415 to 435 (RMLM…PFIY) and 446 to 466 (HPYL…LAVF). Heme b is bound by residues His446 and His482. Transmembrane regions (helical) follow at residues 491–511 (IIAV…LPDS), 515–535 (YAMT…EVHA), and 569–589 (AVLA…LSAI).

The protein belongs to the FRRS1 family. It depends on heme b as a cofactor.

The protein resides in the membrane. Functionally, ferric-chelate reductases reduce Fe(3+) to Fe(2+) before its transport from the endosome to the cytoplasm. This Homo sapiens (Human) protein is Ferric-chelate reductase 1 (FRRS1).